The sequence spans 622 residues: Low affinity potassium transport system protein Kup (622 aa).

The next 12 membrane-spanning stretches (helical) occupy residues 9–29 (LPAL…TSPL), 49–69 (VFGF…IKYI), 101–121 (VLVI…VITP), 137–157 (PQLD…LFVI), 163–183 (GMVG…LAVL), 213–233 (VSFI…ALYA), 247–267 (WFSV…ALLL), 276–296 (PFFL…ATLA), 337–357 (IYIP…IVSF), 363–383 (LAAA…ILSA), 395–415 (LFVG…FSAN), and 419–439 (IVSG…VMTT).

This sequence belongs to the HAK/KUP transporter (TC 2.A.72) family.

The protein localises to the cell inner membrane. The enzyme catalyses K(+)(in) + H(+)(in) = K(+)(out) + H(+)(out). Functionally, responsible for the low-affinity transport of potassium into the cell. Likely operates as a K(+):H(+) symporter. The protein is Low affinity potassium transport system protein Kup of Klebsiella pneumoniae subsp. pneumoniae (strain ATCC 700721 / MGH 78578).